The sequence spans 501 residues: MAFLEFNNVSKGYPGVQALANVSFTVEKGVVHGLMGENGAGKSTLIRVLSGDQAADGGNIFIDGEEQKYTSVRDAFHAGIVVIHQELQLVPELTVAENLWLGRFPAKGGIIHLKTLIETVRAKLEEIGIDVDPSTKVSSLSIGARQMIEIAKAVMLDARVIALDEPTSSLSSRESEILFSLIARLKARGAVILYVSHRLDEIFRLCDSLTVLRDGKLAAHHPKIAETTREQIISEMVGREISNVWGWRERALGDNRLEVKGLSGPRLHTPISFSVRQGEILGFFGLIGAGRSEMARLLYGADARHRGEVTIDGVAVSPNNPKVAIKAGMVLCPEDRKFDGIVQGRSIEENIAISSRRHFSRFGILKPKTEAAQADRFIAKLRVRTPSRRQDIVNLSGGNQQKVILGRWLSEQGIKVLVIDEPTRGIDVGAKSEIYDILYELAAGGVAIVVISSELPEVMGICDRIIVMCQGRVAANVARPDFDERSILTAALPDKNAAGSI.

ABC transporter domains are found at residues 4 to 239 (LEFN…MVGR) and 252 to 495 (LGDN…LPDK). An ATP-binding site is contributed by 36–43 (GENGAGKS).

Belongs to the ABC transporter superfamily. Arabinose importer (TC 3.A.1.2.2) family. In terms of assembly, the complex is composed of two ATP-binding proteins (AraG), two transmembrane proteins (AraH) and a solute-binding protein (AraF).

It localises to the cell inner membrane. It catalyses the reaction L-arabinose(out) + ATP + H2O = L-arabinose(in) + ADP + phosphate + H(+). Its function is as follows. Part of the ABC transporter complex AraFGH involved in arabinose import. Responsible for energy coupling to the transport system. The sequence is that of Arabinose import ATP-binding protein AraG from Rhizobium etli (strain ATCC 51251 / DSM 11541 / JCM 21823 / NBRC 15573 / CFN 42).